We begin with the raw amino-acid sequence, 463 residues long: Glutamate--tRNA ligase (463 aa).

Residues 10-20 carry the 'HIGH' region motif; it reads PSPTGHLHIGG. The 'KMSKS' region motif lies at 236–240; sequence KLSKR. K239 is a binding site for ATP.

This sequence belongs to the class-I aminoacyl-tRNA synthetase family. Glutamate--tRNA ligase type 1 subfamily. Monomer.

It localises to the cytoplasm. It catalyses the reaction tRNA(Glu) + L-glutamate + ATP = L-glutamyl-tRNA(Glu) + AMP + diphosphate. Its function is as follows. Catalyzes the attachment of glutamate to tRNA(Glu) in a two-step reaction: glutamate is first activated by ATP to form Glu-AMP and then transferred to the acceptor end of tRNA(Glu). This Nitratidesulfovibrio vulgaris (strain DP4) (Desulfovibrio vulgaris) protein is Glutamate--tRNA ligase.